Consider the following 496-residue polypeptide: Protein disulfide-isomerase (496 aa).

An N-terminal signal peptide occupies residues 1–18 (MKFLICALFLAASYVAAS). 2 Thioredoxin domains span residues 19-134 (AEAE…KKTG) and 349-474 (GKLK…ANGE). Residues C56, C59, C397, and C400 each act as nucleophile in the active site. Cystine bridges form between C56-C59 and C397-C400. Positions 473–496 (GEVADSEPVEETEEEEEAPKKDEL) are disordered. The segment covering 476–489 (ADSEPVEETEEEEE) has biased composition (acidic residues). The short motif at 493-496 (KDEL) is the Prevents secretion from ER element.

The protein belongs to the protein disulfide isomerase family. Homodimer. In terms of tissue distribution, expressed in all head and body tissues.

Its subcellular location is the endoplasmic reticulum lumen. It catalyses the reaction Catalyzes the rearrangement of -S-S- bonds in proteins.. Participates in the folding of proteins containing disulfide bonds. The sequence is that of Protein disulfide-isomerase (Pdi) from Drosophila melanogaster (Fruit fly).